Reading from the N-terminus, the 1958-residue chain is Echinoderm microtubule-associated protein-like 6 (1958 aa).

10 WD repeats span residues 59–100 (GHND…TVSI), 104–145 (VHTH…LLAS), 148–187 (GHSD…LTAK), 195–233 (GDLQ…RTIQ), 235–273 (AHSA…TKID), 280–321 (GYKG…LILQ), 323–362 (HCEG…LIAR), 364–403 (NMEE…EVVH), 406–445 (DRKE…KKIG), and 561–601 (GHSA…VSNG). Residues 604–627 (ETTPQEGGADSYSEESDSDFSDVP) are disordered. Acidic residues predominate over residues 615–627 (YSEESDSDFSDVP). WD repeat units lie at residues 725–766 (GHDD…CLSL), 770–811 (HHQR…KIAT), 814–853 (GHKD…FTSK), 861–900 (GKLE…KTVK), 901–940 (AHDG…KTYA), 996–1035 (HMEG…RMLA), 1038–1077 (KLKK…DMLS), 1080–1120 (HRKE…RVGI), 1191–1230 (SDVT…QHAR), and 1236–1276 (GHSA…TQES). The span at 1322–1337 (KPHQQLKEVSMEERPP) shows a compositional bias: basic and acidic residues. Positions 1322–1352 (KPHQQLKEVSMEERPPVSRAAPQPEKLQKNN) are disordered. WD repeat units lie at residues 1412-1456 (EHTD…TLSM), 1460-1501 (FHTK…KVAS), 1504-1543 (GHLE…LLYK), 1553-1591 (AKMQ…RLVA), 1593-1638 (AHTG…CRAF), 1685-1724 (HMEG…LLNK), 1726-1767 (NLGH…GKKR), 1768-1807 (DRKS…SLNR), 1880-1919 (ADKA…KFAK), and 1925-1958 (GHSA…WRCL).

The protein belongs to the WD repeat EMAP family.

It localises to the cytoplasm. Its subcellular location is the cytoskeleton. Its function is as follows. May modify the assembly dynamics of microtubules, such that microtubules are slightly longer, but more dynamic. This Mus musculus (Mouse) protein is Echinoderm microtubule-associated protein-like 6 (Eml6).